The chain runs to 450 residues: MITRFAPSPTGYMHVGNARTALICWLYARSKSGKFLLRIDDTDASRSEHKYIEGIKQDLDWLALDWDSCFQQSTRLERYQEVFDLLLDQGVIYPCYETQEELDMKRSMMLKMGLPPIYDRSALKMTEQEMQACSGRLPYFRLKIDQSREITWEDEVRGRVSFQAKNISDPIIKRTDGTYTYMFPSVVDDIDFAITHIIRGEDHVSNTATQICIFDILKAKVPVFVHLPLVHFRDAKISKRVGSDDIEIRHLRDIGMEPMAIKSYLARMGTSLPVEPQENHDVLVESFDIRTFNQAPIKFSLDDISRLNSRIVQCLSFDKVKDRFVQQGLECTEEFWYLIRDNVNTVEDVREWINICNSQITTAIDDKDRTFISEAKALLPDTELDEEVCKAWLQRIKETSNRSTRDVLLPLRLATTGVTTGPGLAQLLPFIGRAEVVRRLECASKGHNAN.

A 'HIGH' region motif is present at residues 7 to 17 (PSPTGYMHVGN). Positions 236-240 (KISKR) match the 'KMSKS' region motif. K239 contributes to the ATP binding site.

It belongs to the class-I aminoacyl-tRNA synthetase family. Glutamate--tRNA ligase type 1 subfamily. Monomer.

It localises to the cytoplasm. It catalyses the reaction tRNA(Glu) + L-glutamate + ATP = L-glutamyl-tRNA(Glu) + AMP + diphosphate. In terms of biological role, catalyzes the attachment of glutamate to tRNA(Glu) in a two-step reaction: glutamate is first activated by ATP to form Glu-AMP and then transferred to the acceptor end of tRNA(Glu). This is Glutamate--tRNA ligase 1 from Anaplasma phagocytophilum (strain HZ).